A 477-amino-acid chain; its full sequence is Aspartyl/glutamyl-tRNA(Asn/Gln) amidotransferase subunit B (477 aa).

The protein belongs to the GatB/GatE family. GatB subfamily. In terms of assembly, heterotrimer of A, B and C subunits.

The catalysed reaction is L-glutamyl-tRNA(Gln) + L-glutamine + ATP + H2O = L-glutaminyl-tRNA(Gln) + L-glutamate + ADP + phosphate + H(+). It carries out the reaction L-aspartyl-tRNA(Asn) + L-glutamine + ATP + H2O = L-asparaginyl-tRNA(Asn) + L-glutamate + ADP + phosphate + 2 H(+). In terms of biological role, allows the formation of correctly charged Asn-tRNA(Asn) or Gln-tRNA(Gln) through the transamidation of misacylated Asp-tRNA(Asn) or Glu-tRNA(Gln) in organisms which lack either or both of asparaginyl-tRNA or glutaminyl-tRNA synthetases. The reaction takes place in the presence of glutamine and ATP through an activated phospho-Asp-tRNA(Asn) or phospho-Glu-tRNA(Gln). The chain is Aspartyl/glutamyl-tRNA(Asn/Gln) amidotransferase subunit B from Oenococcus oeni (strain ATCC BAA-331 / PSU-1).